Here is an 805-residue protein sequence, read N- to C-terminus: Leucine--tRNA ligase (805 aa).

The short motif at 40–51 (PYPSGSGLHVGH) is the 'HIGH' region element. The 'KMSKS' region signature appears at 576–580 (KMSKS). Position 579 (K579) interacts with ATP.

Belongs to the class-I aminoacyl-tRNA synthetase family.

The protein resides in the cytoplasm. The catalysed reaction is tRNA(Leu) + L-leucine + ATP = L-leucyl-tRNA(Leu) + AMP + diphosphate. In Chlorobium chlorochromatii (strain CaD3), this protein is Leucine--tRNA ligase.